A 92-amino-acid chain; its full sequence is Cell division protein FtsB (92 aa).

Residues 1-3 (MRL) are Cytoplasmic-facing. Residues 4–21 (LILILLSVLVLFQYNFWF) traverse the membrane as a helical segment. Topologically, residues 22–92 (GSNGFLDYRQ…VFYHIVKESK (71 aa)) are periplasmic. The stretch at 28-63 (DYRQNAEKIKENQAENEKLSQRNQRINAEIQGLTKG) forms a coiled coil.

The protein belongs to the FtsB family. As to quaternary structure, part of a complex composed of FtsB, FtsL and FtsQ.

The protein localises to the cell inner membrane. Functionally, essential cell division protein. May link together the upstream cell division proteins, which are predominantly cytoplasmic, with the downstream cell division proteins, which are predominantly periplasmic. This is Cell division protein FtsB from Haemophilus influenzae (strain 86-028NP).